We begin with the raw amino-acid sequence, 387 residues long: F-box/LRR-repeat/kelch-repeat protein At2g29770 (387 aa).

Positions 1-34 (MVFISETSDDGSNGGDPTKNPQEEEEENLPPIPQ) are disordered. An F-box domain is found at 31 to 78 (PIPQGIPDELIESTVLLIRRCHYPTLSLLSKTFRRVISSSELYKSRFI). The stretch at 105–128 (CNIPRNISLHLREIKSLPPLNHGS) is one LRR 1 repeat. Kelch repeat units lie at residues 136 to 183 (HMYV…VIDG) and 184 to 231 (RIYV…FVTS). An LRR 2 repeat occupies 196–219 (DHWIEVFDIENRIWSSVPHHRYCN).

This chain is F-box/LRR-repeat/kelch-repeat protein At2g29770, found in Arabidopsis thaliana (Mouse-ear cress).